The following is a 165-amino-acid chain: MTLSRNSHKEDQLEEKVLVVNRCCKVVKGGRKFSFSALILVGDRKGRLGFGFAKANELTDAIRKGGDAARKNLVSINSLEGGSIPHEVLVNHDGAELLLKPAKPGTGIVAGSRIRLILEMAGVKDIVAKSLGSNNPMNQVKAAFKALLTLSCKDDIMKRRAVIND.

Residues 13–76 (LEEKVLVVNR…DAARKNLVSI (64 aa)) enclose the S5 DRBM domain.

Belongs to the universal ribosomal protein uS5 family. As to quaternary structure, part of the 30S ribosomal subunit. Contacts proteins S4 and S8.

Functionally, with S4 and S12 plays an important role in translational accuracy. In terms of biological role, located at the back of the 30S subunit body where it stabilizes the conformation of the head with respect to the body. The protein is Small ribosomal subunit protein uS5 of Chlamydia muridarum (strain MoPn / Nigg).